The following is a 434-amino-acid chain: 4-hydroxyphenylpyruvate dioxygenase (434 aa).

The segment at 1–21 (MPPTPTTPAATGAAAAVTPEH) is disordered. Over residues 7 to 19 (TPAATGAAAAVTP) the composition is skewed to low complexity. VOC domains lie at 41 to 192 (SFHH…FLPG) and 208 to 368 (RFDH…IFTK). Residues His211, His293, and Glu379 each coordinate Fe cation.

It belongs to the 4HPPD family. Fe cation serves as cofactor.

It is found in the cytoplasm. The catalysed reaction is 3-(4-hydroxyphenyl)pyruvate + O2 = homogentisate + CO2. The protein operates within amino-acid degradation; L-phenylalanine degradation; acetoacetate and fumarate from L-phenylalanine: step 3/6. It participates in cofactor biosynthesis; prenylquinone biosynthesis. The polypeptide is 4-hydroxyphenylpyruvate dioxygenase (Hordeum vulgare (Barley)).